The following is a 676-amino-acid chain: UvrABC system protein B (676 aa).

One can recognise a Helicase ATP-binding domain in the interval 35–192 (QGVADGLMYQ…ARLVAMQYTR (158 aa)). Position 48 to 55 (48 to 55 (GVTGSGKT)) interacts with ATP. The Beta-hairpin motif lies at 101–124 (YYDYYQPEAYVPTRDLFIEKDSSV). The Helicase C-terminal domain maps to 439 to 605 (QVDDLLGEIR…GVNKAVRELI (167 aa)). One can recognise a UVR domain in the interval 634–669 (AREIKRLEKLMMDHARNLEFEQAAAARDALTALKNR).

The protein belongs to the UvrB family. In terms of assembly, forms a heterotetramer with UvrA during the search for lesions. Interacts with UvrC in an incision complex.

Its subcellular location is the cytoplasm. In terms of biological role, the UvrABC repair system catalyzes the recognition and processing of DNA lesions. A damage recognition complex composed of 2 UvrA and 2 UvrB subunits scans DNA for abnormalities. Upon binding of the UvrA(2)B(2) complex to a putative damaged site, the DNA wraps around one UvrB monomer. DNA wrap is dependent on ATP binding by UvrB and probably causes local melting of the DNA helix, facilitating insertion of UvrB beta-hairpin between the DNA strands. Then UvrB probes one DNA strand for the presence of a lesion. If a lesion is found the UvrA subunits dissociate and the UvrB-DNA preincision complex is formed. This complex is subsequently bound by UvrC and the second UvrB is released. If no lesion is found, the DNA wraps around the other UvrB subunit that will check the other stand for damage. This is UvrABC system protein B from Bordetella avium (strain 197N).